We begin with the raw amino-acid sequence, 350 residues long: Phosphotriesterase-related protein (350 aa).

A divalent metal cation is bound by residues His22, His24, Glu169, His201, His230, and Asp298.

It belongs to the metallo-dependent hydrolases superfamily. Phosphotriesterase family. It depends on a divalent metal cation as a cofactor.

This is Phosphotriesterase-related protein from Drosophila ananassae (Fruit fly).